Consider the following 249-residue polypeptide: Phosphate import ATP-binding protein PstB 2 (249 aa).

Residues 4–244 (FEVTHLNLFY…PKDHRTQGYV (241 aa)) enclose the ABC transporter domain. 36–43 (GPSGCGKS) contributes to the ATP binding site.

Belongs to the ABC transporter superfamily. Phosphate importer (TC 3.A.1.7) family. In terms of assembly, the complex is composed of two ATP-binding proteins (PstB), two transmembrane proteins (PstC and PstA) and a solute-binding protein (PstS).

The protein localises to the cell inner membrane. It carries out the reaction phosphate(out) + ATP + H2O = ADP + 2 phosphate(in) + H(+). Its function is as follows. Part of the ABC transporter complex PstSACB involved in phosphate import. Responsible for energy coupling to the transport system. This is Phosphate import ATP-binding protein PstB 2 from Shewanella oneidensis (strain ATCC 700550 / JCM 31522 / CIP 106686 / LMG 19005 / NCIMB 14063 / MR-1).